The following is a 292-amino-acid chain: Mycothiol acetyltransferase (292 aa).

N-acetyltransferase domains follow at residues 13-168 and 159-292; these read ALDR…KWLQ and KSVA…VYEK. E40 is a binding site for 1D-myo-inositol 2-(L-cysteinylamino)-2-deoxy-alpha-D-glucopyranoside. Acetyl-CoA is bound at residue 77-79; it reads LAV. E179, K218, and E226 together coordinate 1D-myo-inositol 2-(L-cysteinylamino)-2-deoxy-alpha-D-glucopyranoside. Acetyl-CoA contacts are provided by residues 230–232 and 237–243; these read VGL and RGRGLGD. Y264 provides a ligand contact to 1D-myo-inositol 2-(L-cysteinylamino)-2-deoxy-alpha-D-glucopyranoside.

Belongs to the acetyltransferase family. MshD subfamily. Monomer.

It carries out the reaction 1D-myo-inositol 2-(L-cysteinylamino)-2-deoxy-alpha-D-glucopyranoside + acetyl-CoA = mycothiol + CoA + H(+). Functionally, catalyzes the transfer of acetyl from acetyl-CoA to desacetylmycothiol (Cys-GlcN-Ins) to form mycothiol. The chain is Mycothiol acetyltransferase from Corynebacterium glutamicum (strain R).